Here is a 109-residue protein sequence, read N- to C-terminus: Nucleoid-associated protein plu3840 (109 aa).

Disordered regions lie at residues Met-1 to Lys-23 and Lys-89 to Phe-109.

The protein belongs to the YbaB/EbfC family. Homodimer.

It localises to the cytoplasm. Its subcellular location is the nucleoid. Functionally, binds to DNA and alters its conformation. May be involved in regulation of gene expression, nucleoid organization and DNA protection. This Photorhabdus laumondii subsp. laumondii (strain DSM 15139 / CIP 105565 / TT01) (Photorhabdus luminescens subsp. laumondii) protein is Nucleoid-associated protein plu3840.